The sequence spans 1023 residues: Hemolysin, chromosomal (1023 aa).

3 helical membrane passes run 237 to 259, 267 to 326, and 364 to 410; these read IGAGLDTVSGILSAISASFILSN, KAAA…LSIA, and DASL…GILE. N6-myristoyl lysine attachment occurs at residues K563 and K689. Hemolysin-type calcium-binding repeat units lie at residues 731-748, 749-766, 767-784, 785-802, 815-832, and 833-850; these read FGSKFADIFHGADGDDHI, EGNDGNDRLYGDKGNDTL, SGGNGDDQLYGGDGNDKL, IGGAGNNYLNGGDGDDEL, SGGKGNDKLYGSEGADLL, and DGGEGNDLLKGGYGNDIY. Over residues 747-763 the composition is skewed to basic and acidic residues; sequence HIEGNDGNDRLYGDKGN. A disordered region spans residues 747–780; sequence HIEGNDGNDRLYGDKGNDTLSGGNGDDQLYGGDG.

The protein belongs to the RTX prokaryotic toxin (TC 1.C.11) family. Myristoylated by HlyC; the toxin only becomes active when modified. Mainly myristoylated, while a minor fraction is acylated with pentadecanoyl (C15:0; 26%) and heptadecanoyl (C17:0; 6%) fatty acyl groups. Fatty acylation is involved in binding to host membranes and promotes the irreversible insertion of Hemolysin into the host cell membrane. Can be activated by both myristoylation and palmitoylation, but HlyC catalyzes lysine myristoylation.

It localises to the secreted. The protein localises to the host cell membrane. Its function is as follows. Bacterial hemolysins are exotoxins that attack blood cell membranes and cause cell rupture by forming a pore. The sequence is that of Hemolysin, chromosomal from Escherichia coli.